The following is a 325-amino-acid chain: 1-aminocyclopropane-1-carboxylate oxidase 2 (325 aa).

In terms of domain architecture, Fe2OG dioxygenase spans 157-257 (PTFGTKVSNY…RMSIASFYNP (101 aa)). Fe cation is bound by residues His-181, Asp-183, and His-238.

This sequence belongs to the iron/ascorbate-dependent oxidoreductase family. It depends on Fe cation as a cofactor.

It catalyses the reaction 1-aminocyclopropane-1-carboxylate + L-ascorbate + O2 = ethene + L-dehydroascorbate + hydrogen cyanide + CO2 + 2 H2O. It participates in alkene biosynthesis; ethylene biosynthesis via S-adenosyl-L-methionine; ethylene from S-adenosyl-L-methionine: step 2/2. In Doritaenopsis sp. (Moth orchid), this protein is 1-aminocyclopropane-1-carboxylate oxidase 2 (ACO2).